Reading from the N-terminus, the 709-residue chain is Homeobox-leucine zipper protein HDG4 (709 aa).

The segment at 61-92 (ESGSGKSTGSGHDPVENTAIEQEPPAAKKKRY) is disordered. The homeobox DNA-binding region spans 88 to 147 (KKKRYHRHTASQIQQMEALFKENAHPDTKTRLRLSKKLGLSPIQVKFWFQNKRTQIKAQQ). Positions 137–205 (QNKRTQIKAQ…LDRLRSIVSM (69 aa)) form a coiled coil. One can recognise an START domain in the interval 229 to 466 (AEEEKAIDME…LKRQCERMAS (238 aa)).

It belongs to the HD-ZIP homeobox family. Class IV subfamily. In terms of tissue distribution, expressed in flowers.

The protein localises to the nucleus. Functionally, probable transcription factor. The protein is Homeobox-leucine zipper protein HDG4 of Arabidopsis thaliana (Mouse-ear cress).